The chain runs to 257 residues: Small ribosomal subunit protein uS2 (257 aa).

It belongs to the universal ribosomal protein uS2 family.

The protein is Small ribosomal subunit protein uS2 of Bartonella quintana (strain Toulouse) (Rochalimaea quintana).